A 765-amino-acid polypeptide reads, in one-letter code: MFRFQSLDDDCTLEEEEGLVEEEDEIDQFNDDTFGAGAIDDDWQEEHTRLAELDERVRDVLPGAGDSDTSHGGSNAHSSVLPPPSSSSRLYPDIDERGGGDLAESLTRLILGSDPAIAGVGSTSSDRSHLPPMLSAHPPHPSALAGPSSLLRSYQQHQQFLHRGPAPLSQINSHSIWENSMGFSPVSVNSGLIGQKEDKTLLSIIKEVGLPNRPPSLSRDEGRDLSERVPPPRSSSPVIGSPPVRAVPIGTPPKQPMSQILNQQNNHPSAIHVRASVPMRFPPPFPERLSPNNLLSIAKSPLSHSPFPAGVNPVLSQIQRAQLLNSQVGQFQRGPAPPLLQGGVGGFRPFFGQSGPRIGPHGPPLGHAPIRHNTTHLHPQHRRMLSQRMQNRGDHVGGRGVGERKNRDPYSNLMTQREKEWVAKIQMMQLQSTDPYLDDYYYQNYYEKMEKRQERDRDNRKEHTTKLITPQVAKLEHTYRPVQFAGSLGKLTVSSVNNPRKMIDAVVTSRSDDEEKREKQVWNKRRQILYTVEKMYSLLLEVQDFEKKFLQTPEHQRDVLLEQHKTHTLQLYNSLREKEWDDRVSDEQCLMIMSVRKGKRLISRLLPFLPQPQAAAVVMGIARNLPALAKKDKQDQVLCWLVEPVSVVIQSMSSTSLTDLLQELQGSEGQLPLVLQNKFGVTLLYLILSEGERMQSSDPNCQLMDDNRWTELVFSVTRELLKVPSSALSSPLFTPPNLVSLFSRYVDRQRLELLQEKLQITALSR.

Disordered regions lie at residues 1–98 (MFRF…DERG), 119–147 (GVGS…LAGP), and 210–244 (LPNR…SPPV). Over residues 7–30 (LDDDCTLEEEEGLVEEEDEIDQFN) the composition is skewed to acidic residues. Residues 45–59 (EEHTRLAELDERVRD) show a composition bias toward basic and acidic residues. Residues 218 to 227 (SRDEGRDLSE) show a composition bias toward basic and acidic residues. Residues Ser235 and Ser236 each carry the phosphoserine modification. Residues 235–244 (SSPVIGSPPV) show a composition bias toward low complexity.

The protein belongs to the PAT1 family. In terms of assembly, interacts with ribonucleoprotein complex components.

Its subcellular location is the cytoplasm. It is found in the P-body. The protein resides in the nucleus. The protein localises to the PML body. It localises to the nucleus speckle. In terms of biological role, RNA-binding protein involved in deadenylation-dependent decapping of mRNAs, leading to the degradation of mRNAs. Acts as a scaffold protein that connects deadenylation and decapping machinery. Required for cytoplasmic mRNA processing body (P-body) assembly. The protein is Protein PAT1 homolog 1 (patl1) of Danio rerio (Zebrafish).